The chain runs to 412 residues: Peptidase T (412 aa).

Histidine 81 contributes to the Zn(2+) binding site. The active site involves aspartate 83. Aspartate 144 is a binding site for Zn(2+). The Proton acceptor role is filled by glutamate 178. Zn(2+) contacts are provided by glutamate 179, aspartate 201, and histidine 383.

This sequence belongs to the peptidase M20B family. Zn(2+) serves as cofactor.

The protein resides in the cytoplasm. It catalyses the reaction Release of the N-terminal residue from a tripeptide.. Its function is as follows. Cleaves the N-terminal amino acid of tripeptides. This is Peptidase T from Bacillus cereus (strain ATCC 14579 / DSM 31 / CCUG 7414 / JCM 2152 / NBRC 15305 / NCIMB 9373 / NCTC 2599 / NRRL B-3711).